Here is a 506-residue protein sequence, read N- to C-terminus: Voltage-gated potassium channel regulatory subunit KCNG4 (506 aa).

The Cytoplasmic portion of the chain corresponds to 1 to 216 (MPMSSRDRDL…EMVEDPQSGL (216 aa)). The chain crosses the membrane as a helical span at residues 217–238 (PGKVFACLSVLFVATTAVSLCV). The Extracellular segment spans residues 239 to 259 (STMPDFRAEEGKGECTRKCYY). A helical membrane pass occupies residues 260-281 (IFVVESICVAWFSLEFCLRFVQ). Over 282-292 (APNKCQFFRGP) the chain is Cytoplasmic. A helical transmembrane segment spans residues 293-312 (LNVIDILAISPYYVSLAVSD). Residues 313–326 (ESPEAGERPSSSSY) are Extracellular-facing. A helical; Voltage-sensor membrane pass occupies residues 327 to 351 (LEKVGLVLRVLRALRILYVMRLARH). Residues 352-366 (SLGLQTLGLTVRRCA) lie on the Cytoplasmic side of the membrane. A helical transmembrane segment spans residues 367 to 388 (REFGLLMLFLAVAVTLFSPLVY). The Extracellular segment spans residues 389–403 (VAENESGRVLEFTSI). The segment at residues 404-415 (PASYWWAIISMT) is an intramembrane region (helical). A Selectivity filter motif is present at residues 416-421 (TVGYGD). An intramembrane segment occupies 416 to 423 (TVGYGDMV). Residues 424 to 430 (PRSVPGQ) are Extracellular-facing. A helical membrane pass occupies residues 431 to 459 (MVALSSILSGILIMAFPATSIFHTFSHSY). Residues 460-506 (LELKREQEQVQARLRRLQNTNSASERELLSDVDDLVPEGLTSPGRYM) are Cytoplasmic-facing.

It belongs to the potassium channel family. G (TC 1.A.1.2) subfamily. Kv6.4/KCNG4 sub-subfamily. In terms of assembly, heterotetramer with KCNB1. Does not form homomultimer.

The protein localises to the cell membrane. Regulatory subunit of the voltage-gated potassium (Kv) channel which, when coassembled with KCNB1, modulates the kinetics parameters of the heterotetrameric channel namely the time course of activation, deactivation and inactivation and on the voltage-dependence of activation. Potassium channel subunit that does not form functional channels by itself. Reduces the deactivation rate. Modulates the threshold for activation by shifting by approximately 20 mV in hyperpolarizing direction. Markedly changes the inactivation by shifting the voltage dependence of inactivation by approximately 40 mV in hyperpolarizing direction. Acceleratee activation and enhances the time course of activation. This chain is Voltage-gated potassium channel regulatory subunit KCNG4, found in Mus musculus (Mouse).